A 164-amino-acid polypeptide reads, in one-letter code: Transcriptional regulator MraZ (164 aa).

2 SpoVT-AbrB domains span residues threonine 7 to alanine 57 and alanine 86 to alanine 129. Residues arginine 133–glutamate 164 are disordered. Residues arginine 142 to glutamate 164 show a composition bias toward low complexity.

This sequence belongs to the MraZ family. Forms oligomers.

Its subcellular location is the cytoplasm. The protein resides in the nucleoid. The chain is Transcriptional regulator MraZ from Gluconobacter oxydans (strain 621H) (Gluconobacter suboxydans).